A 371-amino-acid chain; its full sequence is Aldose sugar dehydrogenase YliI (371 aa).

A signal peptide spans 1-20; the sequence is MHRQSFFLVPLICLSSALWA. Pyrroloquinoline quinone is bound at residue Q82. H147 (proton acceptor) is an active-site residue. The PQQ stretch occupies residues 214–215; sequence RN. Positions 240 and 250 each coordinate Ca(2+). Y261 serves as a coordination point for pyrroloquinoline quinone. PQQ regions lie at residues 312–314 and 341–343; these read ALK and RIR.

Belongs to the PQQ oxidoreductase GdhB family. Monomer. The cofactor is Ca(2+). Pyrroloquinoline quinone serves as cofactor.

It is found in the cell outer membrane. Its function is as follows. Aldose sugar dehydrogenase with broad substrate specificity. The physiological substrate is unknown. Can oxidize glucose to gluconolactone. Can also utilize D-arabinose, L-arabinose and 2-deoxy-glucose. Has higher activity towards oligomeric sugars, such as maltose, maltotriose or cellobiose. It may function to input sugar-derived electrons into the respiratory network. This chain is Aldose sugar dehydrogenase YliI (yliI), found in Escherichia coli (strain K12).